The following is a 78-amino-acid chain: UPF0291 protein MCCL_0996 (78 aa).

The protein belongs to the UPF0291 family.

The protein resides in the cytoplasm. This is UPF0291 protein MCCL_0996 from Macrococcus caseolyticus (strain JCSC5402) (Macrococcoides caseolyticum).